Consider the following 214-residue polypeptide: Riboflavin kinase (214 aa).

The interval 1–91 (MRSIMEVETL…YCSIFEDGGA (91 aa)) is H-T-H motif-like. The riboflavin kinase stretch occupies residues 92–214 (PVMRGKVVTG…DGDEVEVTLE (123 aa)). 101–106 (GLGEGQ) contacts CDP. Residues Thr130 and Asn132 each coordinate Mg(2+). Thr182 and Glu190 together coordinate FMN. 195-198 (IKLR) is a CDP binding site.

Belongs to the archaeal riboflavin kinase family. The cofactor is Mg(2+).

The enzyme catalyses riboflavin + CTP = CDP + FMN + H(+). The protein operates within cofactor biosynthesis; FMN biosynthesis; FMN from riboflavin (CTP route): step 1/1. Catalyzes the CTP-dependent phosphorylation of riboflavin (vitamin B2) to form flavin mononucleotide (FMN). The chain is Riboflavin kinase (ribK) from Methanocella arvoryzae (strain DSM 22066 / NBRC 105507 / MRE50).